The primary structure comprises 400 residues: Argininosuccinate synthase (400 aa).

ATP-binding positions include 6-14 and Ala-33; that span reads AYSGGLDTS. Positions 84 and 89 each coordinate L-citrulline. Gly-114 contributes to the ATP binding site. Residues Thr-116, Asn-120, and Asp-121 each coordinate L-aspartate. Asn-120 is a binding site for L-citrulline. Residues Arg-124, Ser-173, Ser-182, Glu-258, and Tyr-270 each coordinate L-citrulline.

Belongs to the argininosuccinate synthase family. Type 1 subfamily. Homotetramer.

Its subcellular location is the cytoplasm. It catalyses the reaction L-citrulline + L-aspartate + ATP = 2-(N(omega)-L-arginino)succinate + AMP + diphosphate + H(+). It functions in the pathway amino-acid biosynthesis; L-arginine biosynthesis; L-arginine from L-ornithine and carbamoyl phosphate: step 2/3. In Thermus thermophilus (strain ATCC 27634 / DSM 579 / HB8), this protein is Argininosuccinate synthase.